The following is a 436-amino-acid chain: Putative actin-fragmin kinase DDB_G0268748 (436 aa).

Residues 14–58 (DKNIDSGSSSSNIGGSSSNSSGTTNKRSSGNFNGSSASSSPSSST) form a disordered region. Residues 18–57 (DSGSSSSNIGGSSSNSSGTTNKRSSGNFNGSSASSSPSSS) show a composition bias toward low complexity.

The protein belongs to the protein kinase superfamily. AFK Ser/Thr protein kinase family.

The protein is Putative actin-fragmin kinase DDB_G0268748 of Dictyostelium discoideum (Social amoeba).